A 360-amino-acid polypeptide reads, in one-letter code: 3-isopropylmalate dehydrogenase (360 aa).

76–89 (GPKWDTIERDIRPE) contacts NAD(+). Residues Arg-96, Arg-106, Arg-134, and Asp-224 each contribute to the substrate site. Mg(2+)-binding residues include Asp-224, Asp-248, and Asp-252. 282–294 (GSAPDIAGKGIAN) contributes to the NAD(+) binding site.

The protein belongs to the isocitrate and isopropylmalate dehydrogenases family. LeuB type 1 subfamily. As to quaternary structure, homodimer. Mg(2+) is required as a cofactor. Requires Mn(2+) as cofactor.

Its subcellular location is the cytoplasm. It carries out the reaction (2R,3S)-3-isopropylmalate + NAD(+) = 4-methyl-2-oxopentanoate + CO2 + NADH. Its pathway is amino-acid biosynthesis; L-leucine biosynthesis; L-leucine from 3-methyl-2-oxobutanoate: step 3/4. In terms of biological role, catalyzes the oxidation of 3-carboxy-2-hydroxy-4-methylpentanoate (3-isopropylmalate) to 3-carboxy-4-methyl-2-oxopentanoate. The product decarboxylates to 4-methyl-2 oxopentanoate. This chain is 3-isopropylmalate dehydrogenase, found in Pseudomonas savastanoi pv. phaseolicola (strain 1448A / Race 6) (Pseudomonas syringae pv. phaseolicola (strain 1448A / Race 6)).